We begin with the raw amino-acid sequence, 314 residues long: Short chain dehydrogenase atnD (314 aa).

Leu41, Lys66, Asp90, and Asn116 together coordinate NADP(+). Residues Ser171 and Tyr204 each act as proton donor in the active site. The NADP(+) site is built by Tyr204 and Lys208. The active-site Lowers pKa of active site Tyr is Lys208.

This sequence belongs to the short-chain dehydrogenases/reductases (SDR) family.

The protein operates within secondary metabolite biosynthesis. Its function is as follows. Short chain dehydrogenase; part of the gene cluster that mediates the biosynthesis of aspercryptins, linear lipopeptides built from six amino acids including 2 highly unusual and nonproteogenic amino acids, 2-amino-octanoic acid (2aoa) and 2-amino-dodecanol (2adol). The core structure of aspercryptins is as follows: Ser/Ala-Thr-Ile/Val-2aoa-Asn-2adol. The first step of aspercryptin biosynthesis is the generation of the fatty acid precursors, octanoic and dodecanoic acids, by the FAS subunits atnF and atnM. The fatty acid precursors are likely transformed into the corresponding alpha-amino fatty acids in three steps. First, they are hydroxylated by the cytochrome P450 monooxygenase atnE, then oxidized to the corresponding alpha-keto acids by the NAD(P)-dependent oxidoreductase atnD, and finally converted to the alpha-amino fatty acids by the PLP-dependent aminotransferases atnH or atnJ. the alpha-amino fatty acids, 2-amino-octanoic and 2-amino-dodecanoic acids, are recognized, activated, and covalently tethered to the NRPS atnA by its fourth and sixth adenylation domains. The second module of atnA is the Thr module and contains an epimerase (E) domain responsible for the epimerization of Thr to D-allo-Thr. Additionally, despite atnA having only one epimerase domain, the first amino acid of aspercryptin A1 is D-Ser, suggesting that serine is either loaded directly as D-Ser on the first module or that the epimerase domain in the threonine module epimerizes both L-Ser and L-Thr. After condensation of the hexapeptide of aspercryptin, the C-terminal reductase (TE) domain might be involved in the reductive release and production of the aldehyde hexapeptide. Further reduction would generate aspercryptins. The variety of aspercryptins produced reflects the flexibility of the atnA NRPS, allowing incorporation of alanine instead of serine, valine for isoleucine, and a C10 fatty amino alcohol instead of the C12 version. AtnB seems to be involved in the selectivity for Ile versus Val by the third module. Moreover, type B, C and D aspercryptins have an additional N-terminal cichorine, acetyl and propionyl group respectively. The protein is Short chain dehydrogenase atnD of Emericella nidulans (strain FGSC A4 / ATCC 38163 / CBS 112.46 / NRRL 194 / M139) (Aspergillus nidulans).